The following is a 129-amino-acid chain: M-zodatoxin-Lt8g (129 aa).

An N-terminal signal peptide occupies residues 1-20 (MKYFVVALALVAAFACIAES). Positions 21-60 (KPAESEHELAEVEEENELADLEDAVWLEHLADLSDLEEAR) are excised as a propeptide. The Processing quadruplet motif motif lies at 57 to 60 (EEAR).

In terms of processing, cleavage of the propeptide depends on the processing quadruplet motif (XXXR, with at least one of X being E). Expressed by the venom gland.

It localises to the secreted. Its function is as follows. Insecticidal, cytolytic and antimicrobial peptide. Has insecticidal activity against the flesh fly S.carnaria. Has antibacterial activity against the Gram-negative bacteria E.coli. Forms voltage-dependent, ion-permeable channels in membranes. At high concentration causes cell membrane lysis. This Lachesana tarabaevi (Spider) protein is M-zodatoxin-Lt8g (cit 1-8).